A 483-amino-acid chain; its full sequence is Jacalin-related lectin 13 (483 aa).

The segment at 1–20 (MTQKLESVGSERKSSEYMWD) is disordered. 3 consecutive Jacalin-type lectin domains span residues 2 to 147 (TQKL…YVTW), 150 to 295 (PARM…YFTT), and 307 to 461 (FREK…YFFP).

It belongs to the jacalin lectin family.

The chain is Jacalin-related lectin 13 (JAL13) from Arabidopsis thaliana (Mouse-ear cress).